The following is a 252-amino-acid chain: MFS-type transporter cctQ (252 aa).

Helical transmembrane passes span 54–74 (IGSL…VVLP) and 116–136 (FGSF…IVGF). Asn179 carries N-linked (GlcNAc...) asparagine glycosylation. Transmembrane regions (helical) follow at residues 180–200 (FSIC…WILA) and 208–228 (FLVW…YFTT).

The protein belongs to the major facilitator superfamily.

The protein localises to the membrane. The protein operates within mycotoxin biosynthesis. Functionally, MFS-type transporter; part of the gene cluster that mediates the biosynthesis of the mycotoxin cyclochlorotine, a hepatotoxic and carcinogenic cyclic chlorinated pentapeptide. Most likely responsible for cyclochlorotine secretion and thereby may contribute to intrinsic resistance. The polypeptide is MFS-type transporter cctQ (Talaromyces islandicus (Penicillium islandicum)).